Reading from the N-terminus, the 351-residue chain is UDP-N-acetylenolpyruvoylglucosamine reductase (351 aa).

Positions 25 to 196 constitute an FAD-binding PCMH-type domain; it reads HIQAQARWLL…AAVEFRLPLL (172 aa). Residue arginine 173 is part of the active site. Serine 246 functions as the Proton donor in the catalytic mechanism. The active site involves glutamate 343.

This sequence belongs to the MurB family. It depends on FAD as a cofactor.

It is found in the cytoplasm. It catalyses the reaction UDP-N-acetyl-alpha-D-muramate + NADP(+) = UDP-N-acetyl-3-O-(1-carboxyvinyl)-alpha-D-glucosamine + NADPH + H(+). It functions in the pathway cell wall biogenesis; peptidoglycan biosynthesis. Functionally, cell wall formation. This Xylella fastidiosa (strain 9a5c) protein is UDP-N-acetylenolpyruvoylglucosamine reductase.